We begin with the raw amino-acid sequence, 156 residues long: Small ribosomal subunit protein uS7 (156 aa).

This sequence belongs to the universal ribosomal protein uS7 family. Part of the 30S ribosomal subunit. Contacts proteins S9 and S11.

Functionally, one of the primary rRNA binding proteins, it binds directly to 16S rRNA where it nucleates assembly of the head domain of the 30S subunit. Is located at the subunit interface close to the decoding center, probably blocks exit of the E-site tRNA. The sequence is that of Small ribosomal subunit protein uS7 from Nocardioides sp. (strain ATCC BAA-499 / JS614).